The sequence spans 276 residues: uncharacterized protein (276 aa).

Positions 1–16 (MELGLILMFASAFVSA) are cleaved as a signal peptide. N-linked (GlcNAc...) asparagine glycosylation is present at asparagine 265.

This is an uncharacterized protein from Encephalitozoon cuniculi (strain GB-M1) (Microsporidian parasite).